The chain runs to 322 residues: CRISPR-associated endonuclease Cas1 (322 aa).

The Mn(2+) site is built by glutamate 149, histidine 214, and glutamate 229.

The protein belongs to the CRISPR-associated endonuclease Cas1 family. In terms of assembly, homodimer, forms a heterotetramer with a Cas2 homodimer. Mg(2+) is required as a cofactor. Requires Mn(2+) as cofactor.

In terms of biological role, CRISPR (clustered regularly interspaced short palindromic repeat), is an adaptive immune system that provides protection against mobile genetic elements (viruses, transposable elements and conjugative plasmids). CRISPR clusters contain spacers, sequences complementary to antecedent mobile elements, and target invading nucleic acids. CRISPR clusters are transcribed and processed into CRISPR RNA (crRNA). Acts as a dsDNA endonuclease. Involved in the integration of spacer DNA into the CRISPR cassette. The protein is CRISPR-associated endonuclease Cas1 of Pyrococcus horikoshii (strain ATCC 700860 / DSM 12428 / JCM 9974 / NBRC 100139 / OT-3).